Reading from the N-terminus, the 336-residue chain is Atypical chemokine receptor 1 (336 aa).

Residues 1-63 (MGNCLHPAEL…CNLLDDSALP (63 aa)) lie on the Extracellular side of the membrane. Asn16, Asn27, and Asn33 each carry an N-linked (GlcNAc...) asparagine glycan. Disulfide bonds link Cys51-Cys276 and Cys129-Cys195. The chain crosses the membrane as a helical span at residues 64–84 (FFILVSVLGILASGIVLFMFF). The Cytoplasmic segment spans residues 85-95 (RPLFHWQLCPG). Residues 96 to 116 (WPVLAQLAVGSALFSIVVPIL) form a helical membrane-spanning segment. Residues 117–129 (APGLGNTRSSALC) lie on the Extracellular side of the membrane. A helical transmembrane segment spans residues 130 to 153 (SLGYCVWYGSAFAQALLLGCHASL). The Cytoplasmic segment spans residues 154–166 (GPKLGADQVPGLT). The helical transmembrane segment at 167 to 187 (LGLSVGLWGVAALLTLPVTLA) threads the bilayer. Over 188 to 207 (SGASGGLCTPVYSMELKALQ) the chain is Extracellular. The helical transmembrane segment at 208–228 (ATHAVACLAIFVLLPLGLFGA) threads the bilayer. Residues 229–244 (KGLKKALGMGPGPWMN) lie on the Cytoplasmic side of the membrane. A helical membrane pass occupies residues 245-265 (ILWAWFIFWWPHGVVLGLDFL). The Extracellular segment spans residues 266–287 (VRSKLLLLSTCLAQQALDLLLN). The chain crosses the membrane as a helical span at residues 288–308 (LAEALAILHCVATPLLLALFC). At 309–336 (HQATRTLLPSLPLPEGWSSHLDTLGSKS) the chain is on the cytoplasmic side.

This sequence belongs to the G-protein coupled receptor 1 family. Atypical chemokine receptor subfamily.

It localises to the early endosome. Its subcellular location is the recycling endosome. It is found in the membrane. Atypical chemokine receptor that controls chemokine levels and localization via high-affinity chemokine binding that is uncoupled from classic ligand-driven signal transduction cascades, resulting instead in chemokine sequestration, degradation, or transcytosis. Also known as interceptor (internalizing receptor) or chemokine-scavenging receptor or chemokine decoy receptor. Has a promiscuous chemokine-binding profile, interacting with inflammatory chemokines of both the CXC and the CC subfamilies but not with homeostatic chemokines. Acts as a receptor for chemokines including CCL2, CCL5, CCL7, CCL11, CCL13, CCL14, CCL17, CXCL5, CXCL6, IL8/CXCL8, CXCL11, GRO, RANTES, MCP-1 and TARC. May regulate chemokine bioavailability and, consequently, leukocyte recruitment through two distinct mechanisms: when expressed in endothelial cells, it sustains the abluminal to luminal transcytosis of tissue-derived chemokines and their subsequent presentation to circulating leukocytes; when expressed in erythrocytes, serves as blood reservoir of cognate chemokines but also as a chemokine sink, buffering potential surges in plasma chemokine levels. This Papio hamadryas (Hamadryas baboon) protein is Atypical chemokine receptor 1 (ACKR1).